The primary structure comprises 534 residues: Probable protein kinase UbiB (534 aa).

The helical transmembrane segment at 23–43 (DLLFDLPLPWFLLALRFALPW) threads the bilayer. The region spanning 125–492 (RFDIEPLASA…WHKRKDDWFL (368 aa)) is the Protein kinase domain. Residues 131 to 139 (LASASVAQV) and K153 contribute to the ATP site. D288 acts as the Proton acceptor in catalysis. Helical transmembrane passes span 490–510 (WFLR…AAGG) and 512–532 (LHEL…YLIV).

Belongs to the ABC1 family. UbiB subfamily.

The protein localises to the cell inner membrane. The protein operates within cofactor biosynthesis; ubiquinone biosynthesis [regulation]. In terms of biological role, is probably a protein kinase regulator of UbiI activity which is involved in aerobic coenzyme Q (ubiquinone) biosynthesis. This Pseudomonas fluorescens (strain ATCC BAA-477 / NRRL B-23932 / Pf-5) protein is Probable protein kinase UbiB.